A 95-amino-acid chain; its full sequence is Acylphosphatase (95 aa).

An Acylphosphatase-like domain is found at 10–95 (CIHATVSGKV…VEDYSDFRVR (86 aa)). Active-site residues include arginine 25 and asparagine 43.

It belongs to the acylphosphatase family.

It catalyses the reaction an acyl phosphate + H2O = a carboxylate + phosphate + H(+). The polypeptide is Acylphosphatase (acyP) (Coxiella burnetii (strain Dugway 5J108-111)).